Reading from the N-terminus, the 304-residue chain is Insulin-like growth factor 1 receptor (304 aa).

Fibronectin type-III domains lie at 1–43 and 49–142; these read ERTV…TMPA and IPGP…VQAK. The Extracellular segment spans residues 1–147; the sequence is ERTVISNLRP…YVQAKTTYEN (147 aa). Residues N115 and N128 are each glycosylated (N-linked (GlcNAc...) asparagine). Residues 148–168 traverse the membrane as a helical segment; the sequence is FIHLIIALPVAVLLIVGGLVI. The Cytoplasmic segment spans residues 169–304; that stretch reads MLYVFHRKRN…HMNGGRKNER (136 aa). The residue at position 225 (S225) is a Phosphoserine; by GSK3-beta. A Phosphoserine modification is found at S229. The segment at 231–304 is disordered; that stretch reads ENKPPEPEEL…HMNGGRKNER (74 aa). Positions 237 to 246 are enriched in acidic residues; sequence PEELDLEPEN. Over residues 247–263 the composition is skewed to low complexity; the sequence is MESVPLDPSASSSSLPL. Basic and acidic residues predominate over residues 264 to 273; that stretch reads PDRHSGHKAE.

It belongs to the protein kinase superfamily. Tyr protein kinase family. Insulin receptor subfamily. In terms of assembly, tetramer of 2 alpha and 2 beta chains linked by disulfide bonds. The alpha chains contribute to the formation of the ligand-binding domain, while the beta chain carries the kinase domain. Forms a hybrid receptor with INSR, the hybrid is a tetramer consisting of 1 alpha chain and 1 beta chain of INSR and 1 alpha chain and 1 beta chain of IGF1R. Interacts with ARRB1 and ARRB2. Interacts with GRB10. Interacts with RACK1. Interacts with SOCS1, SOCS2 and SOCS3. Interacts with 14-3-3 proteins. Interacts with NMD2. Interacts with MAP3K5. Interacts with STAT3. Found in a ternary complex with IGF1 and ITGAV:ITGB3 or ITGA6:ITGB4. Interacts (nascent precursor form) with ZFAND2B. Autophosphorylated on tyrosine residues in response to ligand binding. Autophosphorylation occurs in trans, i.e. one subunit of the dimeric receptor phosphorylates tyrosine residues on the other subunit. Autophosphorylation occurs in a sequential manner. While every single phosphorylation increases kinase activity, all three tyrosine residues in the kinase activation loop have to be phosphorylated for optimal activity. Can be autophosphorylated at additional tyrosine residues (in vitro). May also be phosphorylated at tyrosine residues by mTORC2. Autophosphorylated is followed by phosphorylation of juxtamembrane tyrosines and C-terminal serines. Phosphorylation of Ser-225 by GSK-3beta restrains kinase activity and promotes cell surface expression, it requires a priming phosphorylation at Ser-229. Dephosphorylated by PTPN1. Post-translationally, polyubiquitinated in the activation loop through both 'Lys-48' and 'Lys-29' linkages, promoting receptor endocytosis and subsequent degradation by the proteasome. Ubiquitination is facilitated by pre-existing phosphorylation. In terms of processing, sumoylated with SUMO1. Controlled by regulated intramembrane proteolysis (RIP). Undergoes metalloprotease-dependent constitutive ectodomain shedding to produce a membrane-anchored 52 kDa C-Terminal fragment which is further processed by presenilin gamma-secretase to yield an intracellular 50 kDa fragment.

It localises to the cell membrane. The enzyme catalyses L-tyrosyl-[protein] + ATP = O-phospho-L-tyrosyl-[protein] + ADP + H(+). With respect to regulation, activated by autophosphorylation at tyrosines in the kinase activation loop; phosphorylation at all three tyrosine residues is required for optimal kinase activity. Inhibited by MSC1609119A-1, BMS-754807, PQIP, benzimidazole pyridinone, isoquinolinedione, bis-azaindole, 3-cyanoquinoline, 2,4-bis-arylamino-1,3-pyrimidine, pyrrolopyrimidine, pyrrole-5-carboxaldehyde, picropodophyllin (PPP), tyrphostin derivatives. While most inhibitors bind to the ATP binding pocket, MSC1609119A-1 functions as allosteric inhibitor and binds close to the DFG motif and the activation loop. Functionally, receptor tyrosine kinase which mediates actions of insulin-like growth factor 1 (IGF1). Binds IGF1 with high affinity and IGF2 and insulin (INS) with a lower affinity. The activated IGF1R is involved in cell growth and survival control. IGF1R is crucial for tumor transformation and survival of malignant cell. Ligand binding activates the receptor kinase, leading to receptor autophosphorylation, and tyrosines phosphorylation of multiple substrates, that function as signaling adapter proteins including, the insulin-receptor substrates (IRS1/2), Shc and 14-3-3 proteins. Phosphorylation of IRSs proteins lead to the activation of two main signaling pathways: the PI3K-AKT/PKB pathway and the Ras-MAPK pathway. The result of activating the MAPK pathway is increased cellular proliferation, whereas activating the PI3K pathway inhibits apoptosis and stimulates protein synthesis. Phosphorylated IRS1 can activate the 85 kDa regulatory subunit of PI3K (PIK3R1), leading to activation of several downstream substrates, including protein AKT/PKB. AKT phosphorylation, in turn, enhances protein synthesis through mTOR activation and triggers the antiapoptotic effects of IGFIR through phosphorylation and inactivation of BAD. In parallel to PI3K-driven signaling, recruitment of Grb2/SOS by phosphorylated IRS1 or Shc leads to recruitment of Ras and activation of the ras-MAPK pathway. In addition to these two main signaling pathways IGF1R signals also through the Janus kinase/signal transducer and activator of transcription pathway (JAK/STAT). Phosphorylation of JAK proteins can lead to phosphorylation/activation of signal transducers and activators of transcription (STAT) proteins. In particular activation of STAT3, may be essential for the transforming activity of IGF1R. The JAK/STAT pathway activates gene transcription and may be responsible for the transforming activity. JNK kinases can also be activated by the IGF1R. IGF1 exerts inhibiting activities on JNK activation via phosphorylation and inhibition of MAP3K5/ASK1, which is able to directly associate with the IGF1R. When present in a hybrid receptor with INSR, binds IGF1. This is Insulin-like growth factor 1 receptor (IGF1R) from Sus scrofa (Pig).